A 586-amino-acid chain; its full sequence is Exopolysaccharide phosphotransferase SCO6023 (586 aa).

It belongs to the stealth family.

The polypeptide is Exopolysaccharide phosphotransferase SCO6023 (Streptomyces coelicolor (strain ATCC BAA-471 / A3(2) / M145)).